The sequence spans 130 residues: Small ribosomal subunit protein uS8 (130 aa).

It belongs to the universal ribosomal protein uS8 family. In terms of assembly, part of the 30S ribosomal subunit.

Its function is as follows. One of the primary rRNA binding proteins, it binds directly to 16S rRNA central domain where it helps coordinate assembly of the platform of the 30S subunit. The chain is Small ribosomal subunit protein uS8 from Methanococcus maripaludis (strain C7 / ATCC BAA-1331).